The chain runs to 361 residues: UDP-3-O-acylglucosamine N-acyltransferase (361 aa).

Catalysis depends on His253, which acts as the Proton acceptor.

The protein belongs to the transferase hexapeptide repeat family. LpxD subfamily. As to quaternary structure, homotrimer.

The catalysed reaction is a UDP-3-O-[(3R)-3-hydroxyacyl]-alpha-D-glucosamine + a (3R)-hydroxyacyl-[ACP] = a UDP-2-N,3-O-bis[(3R)-3-hydroxyacyl]-alpha-D-glucosamine + holo-[ACP] + H(+). It functions in the pathway bacterial outer membrane biogenesis; LPS lipid A biosynthesis. In terms of biological role, catalyzes the N-acylation of UDP-3-O-acylglucosamine using 3-hydroxyacyl-ACP as the acyl donor. Is involved in the biosynthesis of lipid A, a phosphorylated glycolipid that anchors the lipopolysaccharide to the outer membrane of the cell. The protein is UDP-3-O-acylglucosamine N-acyltransferase of Burkholderia pseudomallei (strain 668).